A 304-amino-acid polypeptide reads, in one-letter code: Myelin basic protein (304 aa).

Composition is skewed to basic and acidic residues over residues 1–12 (MGNHAGKRELNA) and 22–32 (NRGESEKKRNL). The tract at residues 1–146 (MGNHAGKREL…QKRPSQRHGS (146 aa)) is disordered. Gly2 is modified (N-acetylalanine). Residues 51–65 (ANQNNGTSSQDTAVT) are compositionally biased toward polar residues. Residues 95-113 (FSRDAPGREDNTFKDRPSE) are compositionally biased toward basic and acidic residues. Ser96 carries the phosphoserine modification. Polar residues predominate over residues 117–130 (LQTIQEDSAATSES). Phosphoserine occurs at positions 141 and 146. The residue at position 148 (Tyr148) is a Phosphotyrosine. Thr151 is subject to Phosphothreonine. Ser153 bears the Phosphoserine mark. Thr154 carries the post-translational modification Phosphothreonine. Citrulline; in form C8 is present on residues Arg159 and Arg165. The residue at position 167 (Arg167) is a Citrulline. The residue at position 169 (Thr169) is a Phosphothreonine. Ser174 is subject to Phosphoserine. Residues Arg177 and Arg183 each carry the omega-N-methylarginine modification. The segment at 179–222 (FGGDRGAPKRGSGKDSHHPARTAHYGSLPQKSHGRTQDENPVVH) is induces experimental autoimmune encephalomyelitis (EAE) 1. Residues 180-249 (GGDRGAPKRG…GRGLSLSRFS (70 aa)) are disordered. Ser190 is subject to Phosphoserine. Arg199 carries the citrulline modification. Tyr203 is modified (phosphotyrosine). The residue at position 210 (Ser210) is a Phosphoserine. Thr214 and Thr229 each carry phosphothreonine. Residue Arg231 is modified to Citrulline. Thr232 is modified (phosphothreonine). Gln237 is modified (deamidated glutamine). Arg241 bears the Omega-N-methylarginine; alternate mark. Arg241 is subject to Symmetric dimethylarginine; alternate. Positions 246 to 256 (SRFSWGAEGQR) are induces experimental autoimmune encephalomyelitis (EAE) 2. The residue at position 249 (Ser249) is a Phosphoserine. Citrulline; in form C8 occurs at positions 256 and 264. At Gln281 the chain carries Deamidated glutamine. Arg293 bears the Citrulline; in form C8 mark. The residue at position 295 (Ser295) is a Phosphoserine. Position 296 is a citrulline (Arg296). Residue Ser299 is modified to Phosphoserine; by UHMK1. Position 303 is a citrulline (Arg303). At Arg304 the chain carries Citrulline; in form C8.

It belongs to the myelin basic protein family. As to quaternary structure, homodimer. Isoform 3 exists as a homodimer. In terms of processing, several charge isomers of MBP; C1 (the most cationic, least modified, and most abundant form), C2, C3, C4, C5, C6, C7, C8-A and C8-B (the least cationic form); are produced as a result of optional PTM, such as phosphorylation, deamidation of glutamine or asparagine, arginine citrullination and methylation. C8-A and C8-B contain each two mass isoforms termed C8-A(H), C8-A(L), C8-B(H) and C8-B(L), (H) standing for higher and (L) for lower molecular weight. C3, C4 and C5 are phosphorylated. The ratio of methylated arginine residues decreases during aging, making the protein more cationic. Post-translationally, the N-terminal alanine is acetylated (isoform 3, isoform 4, isoform 5 and isoform 6). Arg-241 was found to be 6% monomethylated and 60% symmetrically dimethylated. In terms of processing, proteolytically cleaved in B cell lysosomes by cathepsin CTSG which degrades the major immunogenic MBP epitope and prevents the activation of MBP-specific autoreactive T cells. Post-translationally, phosphorylated by TAOK2, VRK2, MAPK11, MAPK12, MAPK14 and MINK1. MBP isoforms are found in both the central and the peripheral nervous system, whereas Golli-MBP isoforms are expressed in fetal thymus, spleen and spinal cord, as well as in cell lines derived from the immune system.

The protein localises to the myelin membrane. Its subcellular location is the nucleus. Its function is as follows. The classic group of MBP isoforms (isoform 4-isoform 14) are with PLP the most abundant protein components of the myelin membrane in the CNS. They have a role in both its formation and stabilization. The smaller isoforms might have an important role in remyelination of denuded axons in multiple sclerosis. The non-classic group of MBP isoforms (isoform 1-isoform 3/Golli-MBPs) may preferentially have a role in the early developing brain long before myelination, maybe as components of transcriptional complexes, and may also be involved in signaling pathways in T-cells and neural cells. Differential splicing events combined with optional post-translational modifications give a wide spectrum of isomers, with each of them potentially having a specialized function. Induces T-cell proliferation. The polypeptide is Myelin basic protein (MBP) (Homo sapiens (Human)).